The chain runs to 233 residues: 5'-methylthioadenosine/S-adenosylhomocysteine nucleosidase (233 aa).

The Proton acceptor role is filled by glutamate 12. Substrate is bound by residues glycine 78, isoleucine 152, and 173–174 (ME). Catalysis depends on aspartate 197, which acts as the Proton donor.

This sequence belongs to the PNP/UDP phosphorylase family. MtnN subfamily. Homodimer.

It catalyses the reaction S-adenosyl-L-homocysteine + H2O = S-(5-deoxy-D-ribos-5-yl)-L-homocysteine + adenine. The catalysed reaction is S-methyl-5'-thioadenosine + H2O = 5-(methylsulfanyl)-D-ribose + adenine. The enzyme catalyses 5'-deoxyadenosine + H2O = 5-deoxy-D-ribose + adenine. It participates in amino-acid biosynthesis; L-methionine biosynthesis via salvage pathway; S-methyl-5-thio-alpha-D-ribose 1-phosphate from S-methyl-5'-thioadenosine (hydrolase route): step 1/2. Catalyzes the irreversible cleavage of the glycosidic bond in both 5'-methylthioadenosine (MTA) and S-adenosylhomocysteine (SAH/AdoHcy) to adenine and the corresponding thioribose, 5'-methylthioribose and S-ribosylhomocysteine, respectively. Also cleaves 5'-deoxyadenosine, a toxic by-product of radical S-adenosylmethionine (SAM) enzymes, into 5-deoxyribose and adenine. Thus, is required for in vivo function of the radical SAM enzymes biotin synthase and lipoic acid synthase, that are inhibited by 5'-deoxyadenosine accumulation. This Yersinia pestis bv. Antiqua (strain Angola) protein is 5'-methylthioadenosine/S-adenosylhomocysteine nucleosidase.